The following is a 266-amino-acid chain: MQLSFIESCFHAFKDQSALVHNLTNDVAHNTVANVLLACRASPAMVHDIQEAPDFVCLSDALAINIGTLTQTRLNSMLATAKMAHSKGIPWVLDPVAVGATAFRQQACRQLLSLQPDVIRGNASEILALAGMSSQSRGIDSGDSVAAAHAAAEALTQYAKVVVVTGEIDWVTDGMNRWAINHGHPMMTQVTAIGCALTALIAGFVGANKKAMAQAAVTALCYYGQAAEHAMQIAQGPGSFYIHFLDSLYALQATDVSQQARVTLYE.

Met45 serves as a coordination point for substrate. 2 residues coordinate ATP: Arg120 and Thr165. Ala192 contributes to the substrate binding site.

Belongs to the Thz kinase family. Mg(2+) is required as a cofactor.

The enzyme catalyses 5-(2-hydroxyethyl)-4-methylthiazole + ATP = 4-methyl-5-(2-phosphooxyethyl)-thiazole + ADP + H(+). Its pathway is cofactor biosynthesis; thiamine diphosphate biosynthesis; 4-methyl-5-(2-phosphoethyl)-thiazole from 5-(2-hydroxyethyl)-4-methylthiazole: step 1/1. Its function is as follows. Catalyzes the phosphorylation of the hydroxyl group of 4-methyl-5-beta-hydroxyethylthiazole (THZ). The sequence is that of Hydroxyethylthiazole kinase from Psychrobacter sp. (strain PRwf-1).